The chain runs to 256 residues: Ribonuclease 3 (256 aa).

The RNase III domain occupies 3–125 (LDALQQRLGY…IVGAVFLDAG (123 aa)). Position 38 (E38) interacts with Mg(2+). The active site involves D42. Mg(2+)-binding residues include D111 and E114. Residue E114 is part of the active site. In terms of domain architecture, DRBM spans 152–222 (DAKTLLQEYL…AKLALDEVQK (71 aa)). A disordered region spans residues 229–256 (KRSRAERTGKTRKQPVPPDPQLSLRLKE).

It belongs to the ribonuclease III family. As to quaternary structure, homodimer. Mg(2+) is required as a cofactor.

The protein localises to the cytoplasm. The enzyme catalyses Endonucleolytic cleavage to 5'-phosphomonoester.. Its function is as follows. Digests double-stranded RNA. Involved in the processing of primary rRNA transcript to yield the immediate precursors to the large and small rRNAs (23S and 16S). Processes some mRNAs, and tRNAs when they are encoded in the rRNA operon. Processes pre-crRNA and tracrRNA of type II CRISPR loci if present in the organism. The polypeptide is Ribonuclease 3 (Cupriavidus pinatubonensis (strain JMP 134 / LMG 1197) (Cupriavidus necator (strain JMP 134))).